Consider the following 758-residue polypeptide: MVRTKNQSSSSSASSSSTKSPIKSSSGAGSSGGGVGGRQSTHRSSSASNVAAVVAGGSSAAGGGSSSNRRSPGSSPDGDDDTTTTDDLTPTTCSPRSGHHHSYGGYSSSVHKQNLYVVSFPIIFLFNVLRSLIYQLFCIFRYLYGASTKVIYRPHRRDCNIEIVVQNSSKEQQQSLNHPSELNREGDGQEQQLSNQPQRFRPIQPLEMAANRPGGGYSPGPGDPLLAKQKHHHRRAFEYISKALKIDEENEGHKELAIELYRKGIKELEDGIAVDCWSGRGDVWDRAQRLHDKMQTNLSMARDRLHFLALREQDLQMQRLSLKEKQKEEARSKPQKTREPMLAGMTNEPMKLRVRSSGYGPKATTSAQPTASGRKLTIGSKRPVNLAVANKSQTLPRNLGSKTSVGAVQRQPAKTAATPPAVRRQFSSGRNTPPQRSRTPINNNGPSGSGASTPVVSVKGVEQKLVQLILDEIVEGGAKVEWTDIAGQDVAKQALQEMVILPSVRPELFTGLRAPAKGLLLFGPPGNGKTLLARAVATECSATFLNISAASLTSKYVGDGEKLVRALFAVARHMQPSIIFIDEVDSLLSERSSSEHEASRRLKTEFLVEFDGLPGNPDGDRIVVLAATNRPQELDEAALRRFTKRVYVSLPDEQTRELLLNRLLQKQGSPLDTEALRRLAKITDGYSGSDLTALAKDAALEPIRELNVEQVKCLDISAMRAITEQDFHSSLKRIRRSVAPQSLNSYEKWSQDYGDITI.

Residues 1–103 form a disordered region; it reads MVRTKNQSSS…SPRSGHHHSY (103 aa). Over 1–121 the chain is Cytoplasmic; the sequence is MVRTKNQSSS…KQNLYVVSFP (121 aa). Positions 1–210 are required for localization to punctate cytoplasmic foci; the sequence is MVRTKNQSSS…RPIQPLEMAA (210 aa). Low complexity-rich tracts occupy residues 8-28, 43-58, 66-76, and 85-95; these read SSSS…SSGA, RSSS…AGGS, SSNRRSPGSSP, and TDDLTPTTCSP. An intramembrane region (helical) is located at residues 122-142; sequence IIFLFNVLRSLIYQLFCIFRY. Over 143–758 the chain is Cytoplasmic; the sequence is LYGASTKVIY…WSQDYGDITI (616 aa). Polar residues-rich tracts occupy residues 169–180 and 189–198; these read SKEQQQSLNHPS and QEQQLSNQPQ. The segment at 169 to 202 is disordered; sequence SKEQQQSLNHPSELNREGDGQEQQLSNQPQRFRP. Residues 208 to 758 form a sufficient for interaction with microtubules and microtubule severing region; the sequence is MAANRPGGGY…WSQDYGDITI (551 aa). The MIT domain maps to 233 to 308; it reads HRRAFEYISK…SMARDRLHFL (76 aa). The tract at residues 353–454 is disordered; that stretch reads RVRSSGYGPK…GPSGSGASTP (102 aa). Polar residues-rich tracts occupy residues 390–406 and 425–454; these read NKSQ…TSVG and QFSS…ASTP. Residues 443 to 455 form a required for interaction with microtubules region; sequence NNGPSGSGASTPV. Position 523–530 (523–530) interacts with ATP; the sequence is GPPGNGKT.

This sequence belongs to the AAA ATPase family. Spastin subfamily. In terms of assembly, homohexamer. The homohexamer is stabilized by ATP-binding. The homohexamer may adopt a ring conformation through which microtubules pass prior to being severed. Interacts with microtubules. Interacts with atl; may be involved in microtubule dynamics.

Its subcellular location is the membrane. The protein localises to the cytoplasm. It is found in the cytoskeleton. It localises to the microtubule organizing center. The protein resides in the centrosome. Its subcellular location is the chromosome. The protein localises to the lipid droplet. The enzyme catalyses n ATP + n H2O + a microtubule = n ADP + n phosphate + (n+1) alpha/beta tubulin heterodimers.. In terms of biological role, ATP-dependent microtubule severing protein. Stimulates microtubule minus-end depolymerization and poleward microtubule flux in the mitotic spindle. Regulates microtubule stability in the neuromuscular junction synapse. Involved in lipid metabolism by regulating the size and distribution of lipid droplets. Involved in axon regeneration by regulating microtubule severing. The protein is Spastin of Drosophila sechellia (Fruit fly).